A 1257-amino-acid polypeptide reads, in one-letter code: LIM domain kinase 1 (1257 aa).

The tract at residues 1-24 is disordered; it reads MHHQQRLRANGGRGGTGLGAGSGP. Positions 1 to 147 are interaction with LATS1; it reads MHHQQRLRAN…ERSKLYCGQC (147 aa). Gly residues predominate over residues 11–24; that stretch reads GGRGGTGLGAGSGP. LIM zinc-binding domains follow at residues 31–93 and 94–154; these read PLCA…RFGD and ACQQ…RSCQ. In terms of domain architecture, PDZ spans 174–274; that stretch reads LVEIPKDATP…MLQLTVEHDP (101 aa). A Protein kinase domain is found at 401 to 686; that stretch reads LVIGEKLGEG…PCFETLHVWL (286 aa). Residues 407–415 and Lys430 contribute to the ATP site; that span reads LGEGFFGKV. Residue Asp522 is part of the active site. Disordered stretches follow at residues 552–587, 759–811, and 881–900; these read LPSG…RQRR, QDIP…ERAL, and EELL…QHHR. Basic and acidic residues predominate over residues 794 to 811; that stretch reads QEERRNLTPDTESKERAL. A Phosphoserine modification is found at Ser1000. 3 disordered regions span residues 1010–1037, 1085–1182, and 1212–1257; these read AKQL…NPPL, SAQQ…EKVH, and AAGT…NTRC. Composition is skewed to polar residues over residues 1085–1095 and 1113–1125; these read SAQQQRTSSNH and RTGS…SNCV. Low complexity-rich tracts occupy residues 1126 to 1137 and 1145 to 1166; these read SPTRSSRPGSPT and TAAT…HQQQ.

The protein belongs to the protein kinase superfamily. TKL Ser/Thr protein kinase family. As to quaternary structure, interacts with LATS1, and this interaction inhibits phosphorylation of tsr/cofilin. Phosphorylated on serine and/or threonine residues by ROCK1. Phosphorylated by PAK4 resulting in increased LIMK1 ability to phosphorylate cofilin. May be dephosphorylated and inactivated by SSH1. In terms of tissue distribution, expressed throughout the imaginal disks of the eye, leg and wing.

The protein localises to the cytoplasm. Its subcellular location is the cleavage furrow. It is found in the midbody. The enzyme catalyses L-seryl-[protein] + ATP = O-phospho-L-seryl-[protein] + ADP + H(+). The catalysed reaction is L-threonyl-[protein] + ATP = O-phospho-L-threonyl-[protein] + ADP + H(+). Functionally, protein kinase which regulates actin filament dynamics. Phosphorylates and inactivates the actin binding/depolymerizing factor tsr/cofilin, thereby stabilizing the actin cytoskeleton. Modulation of actin cytoskeleton dynamics may be essential for imaginal disk morphogenesis and axon guidance. This chain is LIM domain kinase 1 (LIMK1), found in Drosophila melanogaster (Fruit fly).